Reading from the N-terminus, the 77-residue chain is uncharacterized protein (77 aa).

Residues 13 to 33 (VPVIRLSVFLHFFFVFPFCLL) traverse the membrane as a helical segment.

Its subcellular location is the membrane. This is an uncharacterized protein from Saccharomyces cerevisiae (strain ATCC 204508 / S288c) (Baker's yeast).